A 378-amino-acid polypeptide reads, in one-letter code: Putative glutamate--cysteine ligase 2 (378 aa).

Belongs to the glutamate--cysteine ligase type 2 family. YbdK subfamily.

The enzyme catalyses L-cysteine + L-glutamate + ATP = gamma-L-glutamyl-L-cysteine + ADP + phosphate + H(+). ATP-dependent carboxylate-amine ligase which exhibits weak glutamate--cysteine ligase activity. This is Putative glutamate--cysteine ligase 2 from Salinispora arenicola (strain CNS-205).